The primary structure comprises 1227 residues: Methionine synthase (1227 aa).

The region spanning 2 to 325 (SSKVEQLRAQ…EHIAAMSRAV (324 aa)) is the Hcy-binding domain. Residues cysteine 247, cysteine 310, and cysteine 311 each coordinate Zn(2+). One can recognise a Pterin-binding domain in the interval 356-617 (FVNVGERTNV…LPAELRDAVE (262 aa)). The 95-residue stretch at 650–744 (QQAEWRSWDV…FIEASKEKGS (95 aa)) folds into the B12-binding N-terminal domain. Residues glutamate 694, 756–760 (GDVHD), histidine 759, serine 804, threonine 808, and alanine 860 contribute to the methylcob(III)alamin site. The B12-binding domain maps to 746–881 (NGKMVIATVK…SDTQRDDFVA (136 aa)). One can recognise an AdoMet activation domain in the interval 897 to 1227 (KKPRTPPVTL…LAPNLGYDAD (331 aa)). Residues aspartate 946, arginine 1134, and 1189–1190 (YF) contribute to the S-adenosyl-L-methionine site.

It belongs to the vitamin-B12 dependent methionine synthase family. Methylcob(III)alamin is required as a cofactor. Requires Zn(2+) as cofactor.

It carries out the reaction (6S)-5-methyl-5,6,7,8-tetrahydrofolate + L-homocysteine = (6S)-5,6,7,8-tetrahydrofolate + L-methionine. It functions in the pathway amino-acid biosynthesis; L-methionine biosynthesis via de novo pathway; L-methionine from L-homocysteine (MetH route): step 1/1. Catalyzes the transfer of a methyl group from methyl-cobalamin to homocysteine, yielding enzyme-bound cob(I)alamin and methionine. Subsequently, remethylates the cofactor using methyltetrahydrofolate. This is Methionine synthase (metH) from Salmonella typhimurium (strain LT2 / SGSC1412 / ATCC 700720).